We begin with the raw amino-acid sequence, 85 residues long: UPF0297 protein CLL_A1175 (85 aa).

It belongs to the UPF0297 family.

The chain is UPF0297 protein CLL_A1175 from Clostridium botulinum (strain Eklund 17B / Type B).